A 514-amino-acid polypeptide reads, in one-letter code: Importin subunit alpha-3 (514 aa).

Residues 1–51 (MSSNRQAYYKNNAKEQIGKEKRNEEVVSIRKDKREEAISKRRNINTQIEDD) form the IBB domain. The disordered stretch occupies residues 1-62 (MSSNRQAYYK…ETSTTPPGPF (62 aa)). Basic and acidic residues predominate over residues 12–39 (NAKEQIGKEKRNEEVVSIRKDKREEAIS). ARM repeat units lie at residues 101-142 (IDDL…TSEQ), 143-187 (TQAV…FRDY), 188-226 (CLEL…CKDP), 227-271 (APSP…EHIQ), 272-311 (MVIE…TDEQ), 312-353 (TQLV…NQQQ), 354-393 (VQDV…ISGR), and 394-436 (PNQV…KMAG). A disordered region spans residues 485–514 (GNVEGAQSSAFGGDVPPVPDAPNGGWNFGK).

Belongs to the importin alpha family. Forms a complex with an importin beta subunit. May interact with transcription factor cebp-1 (via N-terminus). Interacts with cmk-1; affinity for cmk-1 is increased in the presence of Ca(2+) and calmodulin and leads to increased nuclear accumulation of cmk-1 in FLP neurons upon prolonged heat activation. Expressed in larval and adult germline and somatic tissues, including neurons.

The protein localises to the cytoplasm. It is found in the nucleus. Binds specifically and directly to substrates containing either a simple or bipartite NLS motif. Promotes docking of import substrates to the nuclear envelope. Seems to act as a cytosolic receptor for both simple and bipartite NLS motifs. Necessary for correct nucleoporin localization within the germline. Essential gene for embryonic and larval development. May be dispensable for axon development, but required for axon regeneration in both mechanosensory and motor neurons. Required for oogenic development, ima-1 and ima-2 cannot functionally compensate for loss of ima-3. In Caenorhabditis elegans, this protein is Importin subunit alpha-3 (ima-3).